The sequence spans 1409 residues: Adhesion and penetration protein autotransporter (1409 aa).

The first 25 residues, 1–25 (MKKTVFRLNFLTACVSLGIASQAWA), serve as a signal peptide directing secretion. A Peptidase S6 domain is found at 26 to 294 (GHTYFGIDYQ…LIREEWFYNE (269 aa)). The active site involves serine 250. 2 disordered regions span residues 866 to 888 (YSAS…TPTS) and 1016 to 1078 (AKQV…SKRA). Residues 1057 to 1067 (VEQTTETQTSK) are compositionally biased toward polar residues. Residues 1068 to 1077 (PKTKKGRSKR) show a composition bias toward basic residues. Residues 1156–1409 (VDQAQSALWT…NVGVKLGYRW (254 aa)) form the Autotransporter domain.

It localises to the periplasm. The protein resides in the secreted. It is found in the cell surface. Its subcellular location is the cell outer membrane. Functionally, probable protease; promotes adherence and invasion by directly binding to a host cell structure. The sequence is that of Adhesion and penetration protein autotransporter (hap) from Haemophilus influenzae (strain ATCC 51907 / DSM 11121 / KW20 / Rd).